A 242-amino-acid polypeptide reads, in one-letter code: Small ribosomal subunit protein uS2 (242 aa).

Belongs to the universal ribosomal protein uS2 family.

The polypeptide is Small ribosomal subunit protein uS2 (Shewanella amazonensis (strain ATCC BAA-1098 / SB2B)).